Reading from the N-terminus, the 303-residue chain is MADTAPLGTRTDGVEGGVGLTALLVAAARAIETHRPDALAQDIYAEHFVLGARASAHWPVRLDRAPGGDTSPLWGRFARYFGLRTRVLDDFLLRSVRSAGIRQVVLLGAGLDARAFRLDWLSDCVIFEIDRDGVLAFKHRVLDTLSAEPGARRVPIGTDLRADWAGALTATGFDATAPTAWLVEGLLFYLPHAAETALIDTVDRLSAPGSALAYEVKLEKDLMAYRDSPLYVSTRRQLGIDLLDLFSREPRPDSAARLRDRGWTASVHTPFDFTRRHGRGPLPEENDALAGNRWVFADRARPA.

Residues aspartate 130 and 159-160 (DL) contribute to the S-adenosyl-L-methionine site.

The protein belongs to the UPF0677 family.

Exhibits S-adenosyl-L-methionine-dependent methyltransferase activity. This is Putative S-adenosyl-L-methionine-dependent methyltransferase SCO6443 from Streptomyces coelicolor (strain ATCC BAA-471 / A3(2) / M145).